Reading from the N-terminus, the 312-residue chain is UDP-N-acetylenolpyruvoylglucosamine reductase (312 aa).

One can recognise an FAD-binding PCMH-type domain in the interval Arg-30 to Gly-202. Residue Arg-181 is part of the active site. Ser-232 functions as the Proton donor in the catalytic mechanism. Glu-302 is an active-site residue.

This sequence belongs to the MurB family. Requires FAD as cofactor.

It is found in the cytoplasm. The enzyme catalyses UDP-N-acetyl-alpha-D-muramate + NADP(+) = UDP-N-acetyl-3-O-(1-carboxyvinyl)-alpha-D-glucosamine + NADPH + H(+). It functions in the pathway cell wall biogenesis; peptidoglycan biosynthesis. Cell wall formation. The protein is UDP-N-acetylenolpyruvoylglucosamine reductase of Synechococcus sp. (strain CC9311).